We begin with the raw amino-acid sequence, 344 residues long: Phenylalanine--tRNA ligase alpha subunit (344 aa).

Mg(2+) is bound at residue E256.

Belongs to the class-II aminoacyl-tRNA synthetase family. Phe-tRNA synthetase alpha subunit type 1 subfamily. As to quaternary structure, tetramer of two alpha and two beta subunits. The cofactor is Mg(2+).

It is found in the cytoplasm. It carries out the reaction tRNA(Phe) + L-phenylalanine + ATP = L-phenylalanyl-tRNA(Phe) + AMP + diphosphate + H(+). The protein is Phenylalanine--tRNA ligase alpha subunit of Bacillus cytotoxicus (strain DSM 22905 / CIP 110041 / 391-98 / NVH 391-98).